A 634-amino-acid polypeptide reads, in one-letter code: Poly(ribitol-phosphate) beta-glucosyltransferase (634 aa).

The protein belongs to the glycosyltransferase 2 family.

It carries out the reaction 4-O-[(D-ribitylphospho)(n)-D-ribitylphospho-(2R)-glycerylphospho]-N-acetyl-beta-D-mannosaminyl-(1-&gt;4)-N-acetyl-alpha-D-glucosaminyl di-trans,octa-cis-undecaprenyl diphosphate + n UDP-alpha-D-glucose = 4-O-[(2-beta-D-glucosyl-D-ribitylphospho)(n)-D-ribitylphospho-(2R)-glycerylphospho]-N-acetyl-beta-D-mannosaminyl-(1-&gt;4)-N-acetyl-alpha-D-glucosaminyl di-trans,octa-cis-undecaprenyl diphosphate + n UDP + n H(+). It participates in cell wall biogenesis; poly(ribitol phosphate) teichoic acid biosynthesis. Its function is as follows. Attaches glucose residues to poly(RboP)-wall teichoic acids (WTAs). The polypeptide is Poly(ribitol-phosphate) beta-glucosyltransferase (Bacillus spizizenii (strain ATCC 23059 / NRRL B-14472 / W23) (Bacillus subtilis subsp. spizizenii)).